The chain runs to 541 residues: Chaperonin GroEL 1 (541 aa).

ATP is bound by residues T29–P32, D86–T90, G415, N479–A481, and D495.

It belongs to the chaperonin (HSP60) family. In terms of assembly, forms a cylinder of 14 subunits composed of two heptameric rings stacked back-to-back. Interacts with the co-chaperonin GroES.

It localises to the cytoplasm. The catalysed reaction is ATP + H2O + a folded polypeptide = ADP + phosphate + an unfolded polypeptide.. Its function is as follows. Together with its co-chaperonin GroES, plays an essential role in assisting protein folding. The GroEL-GroES system forms a nano-cage that allows encapsulation of the non-native substrate proteins and provides a physical environment optimized to promote and accelerate protein folding. This Streptomyces coelicolor (strain ATCC BAA-471 / A3(2) / M145) protein is Chaperonin GroEL 1.